Here is a 507-residue protein sequence, read N- to C-terminus: Histidine ammonia-lyase (507 aa).

Residues 141 to 143 (ASG) constitute a cross-link (5-imidazolinone (Ala-Gly)). Position 142 is a 2,3-didehydroalanine (Ser) (serine 142).

The protein belongs to the PAL/histidase family. Contains an active site 4-methylidene-imidazol-5-one (MIO), which is formed autocatalytically by cyclization and dehydration of residues Ala-Ser-Gly.

Its subcellular location is the cytoplasm. The catalysed reaction is L-histidine = trans-urocanate + NH4(+). Its pathway is amino-acid degradation; L-histidine degradation into L-glutamate; N-formimidoyl-L-glutamate from L-histidine: step 1/3. This Natranaerobius thermophilus (strain ATCC BAA-1301 / DSM 18059 / JW/NM-WN-LF) protein is Histidine ammonia-lyase.